The primary structure comprises 91 residues: Large ribosomal subunit protein uL22 (91 aa).

The protein belongs to the universal ribosomal protein uL22 family. In terms of assembly, part of the 50S ribosomal subunit.

In terms of biological role, this protein binds specifically to 23S rRNA; its binding is stimulated by other ribosomal proteins, e.g. L4, L17, and L20. It is important during the early stages of 50S assembly. It makes multiple contacts with different domains of the 23S rRNA in the assembled 50S subunit and ribosome. The globular domain of the protein is located near the polypeptide exit tunnel on the outside of the subunit, while an extended beta-hairpin is found that lines the wall of the exit tunnel in the center of the 70S ribosome. The polypeptide is Large ribosomal subunit protein uL22 (rplV) (Clover yellow edge phytoplasma).